The chain runs to 303 residues: Caspase-7 (303 aa).

Met-1 bears the N-acetylmethionine mark. A propeptide spanning residues 1-23 (MTDDQDCAAELEKVDSSSEDGVD) is cleaved from the precursor. The disordered stretch occupies residues 1–26 (MTDDQDCAAELEKVDSSSEDGVDAKP). Over residues 10–26 (ELEKVDSSSEDGVDAKP) the composition is skewed to basic and acidic residues. A Phosphoserine modification is found at Ser-30. An exosite region spans residues 38-41 (KKKR). Residues 76–87 (KNFDKATGMDVR) form a loop L1 region. His-144 is a catalytic residue. Thr-173 carries the phosphothreonine modification. The active site involves Cys-186. The tract at residues 187 to 196 (RGTELDDGIQ) is loop L2. Positions 199–206 (SGPINDID) are excised as a propeptide. A loop L3 region spans residues 226–238 (VPGYYSWRNPGKG). Ser-239 carries the phosphoserine modification. Positions 274–288 (ESQSDDPRFNEKKQI) are loop L4.

This sequence belongs to the peptidase C14A family. In terms of assembly, heterotetramer that consists of two anti-parallel arranged heterodimers, each one formed by a 20 kDa (p20) and a 11 kDa (p11) subunit. Interacts with XIAP (via its second BIR domain); inhibiting CASP7 activity. Interacts with BIRC6/bruce. Interacts with ATXN3 (short isoform 1). Interacts with HSPA5. Post-translationally, cleavage by different proteases, such as granzyme B (GZMB), caspase-1 (CASP1), caspase-8 (CASP8) or caspase-9 (CASP9) generate the two active subunits. Its involvement in different programmed cell death processes is probably specified by the protease that activates CASP7. Cleaved and activated by initiator caspases (CASP8 and/or CASP9), leading to execution phase of apoptosis. Cleavage and maturation by GZMB regulates granzyme-mediated programmed cell death. Cleaved and activated by CASP1 in response to bacterial infection. Propeptide domains can also be cleaved efficiently by CASP3. Active heterodimers between the small subunit of caspase-7 and the large subunit of CASP3, and vice versa, also occur. Also cleaved at the N-terminus at alternative sites by CAPN1, leading to its activation. In terms of processing, phosphorylation at Ser-30 and Ser-239 by PAK2 inhibits its activity. Phosphorylation at Ser-30 prevents cleavage and activation by initiator caspase CASP9, while phosphorylation at Ser-239 prevents thiol protease activity by preventing substrate-binding. Ubiquitinated by BIRC6; this activity is inhibited by DIABLO/SMAC. Highly expressed in heart, lung, liver and kidney. Low levels in spleen, skeletal muscle and testis. No expression in the brain.

It localises to the cytoplasm. Its subcellular location is the cytosol. It is found in the nucleus. The protein resides in the secreted. The protein localises to the extracellular space. It catalyses the reaction Strict requirement for an Asp residue at position P1 and has a preferred cleavage sequence of Asp-Glu-Val-Asp-|-.. With respect to regulation, during activation, the N-terminal disordered prodomain is removed by cleavage. Concomitantly, double cleavage gives rise to a large Caspase-7 subunit p20 and a small Caspase-7 subunit p11. The two large and two small subunits then assemble to form the active CASP7 complex. Can be cleaved and activated by different caspases, depending on the context. Cleaved and activated by initiator caspases (CASP8 and/or CASP9), leading to execution phase of apoptosis. Cleavage and maturation by GZMB regulates granzyme-mediated programmed cell death. Cleavage and maturation by CASP1 regulates pyroptosis. Inhibited by XIAP, which directly binds to the active site pocket and obstructs substrate entry. Phosphorylation at Ser-30 and Ser-239 by PAK2 inhibits its activity. Inhibited by BIRC6; following inhibition of BIRC6-caspase binding by DIABLO/SMAC, BIRC6 is subjected to caspase cleavage, leading to an increase in active caspases. In terms of biological role, thiol protease involved in different programmed cell death processes, such as apoptosis, pyroptosis or granzyme-mediated programmed cell death, by proteolytically cleaving target proteins. Has a marked preference for Asp-Glu-Val-Asp (DEVD) consensus sequences, with some plasticity for alternate non-canonical sequences. Its involvement in the different programmed cell death processes is probably determined by upstream proteases that activate CASP7. Acts as an effector caspase involved in the execution phase of apoptosis: following cleavage and activation by initiator caspases (CASP8 and/or CASP9), mediates execution of apoptosis by catalyzing cleavage of proteins, such as CLSPN, PARP1, PTGES3 and YY1. Compared to CASP3, acts as a minor executioner caspase and cleaves a limited set of target proteins. Acts as a key regulator of the inflammatory response in response to bacterial infection by catalyzing cleavage and activation of the sphingomyelin phosphodiesterase SMPD1 in the extracellular milieu, thereby promoting membrane repair. Regulates pyroptosis in intestinal epithelial cells: cleaved and activated by CASP1 in response to S.typhimurium infection, promoting its secretion to the extracellular milieu, where it catalyzes activation of SMPD1, generating ceramides that repair membranes and counteract the action of gasdermin-D (GSDMD) pores. Regulates granzyme-mediated programmed cell death in hepatocytes: cleaved and activated by granzyme B (GZMB) in response to bacterial infection, promoting its secretion to the extracellular milieu, where it catalyzes activation of SMPD1, generating ceramides that repair membranes and counteract the action of perforin (PRF1) pores. Following cleavage by CASP1 in response to inflammasome activation, catalyzes processing and inactivation of PARP1, alleviating the transcription repressor activity of PARP1. Acts as an inhibitor of type I interferon production during virus-induced apoptosis by mediating cleavage of antiviral proteins CGAS, IRF3 and MAVS, thereby preventing cytokine overproduction. Cleaves and activates sterol regulatory element binding proteins (SREBPs). Cleaves phospholipid scramblase proteins XKR4, XKR8 and XKR9. Cleaves BIRC6 following inhibition of BIRC6-caspase binding by DIABLO/SMAC. This Mus musculus (Mouse) protein is Caspase-7.